The sequence spans 93 residues: C-C motif chemokine 17 (93 aa).

An N-terminal signal peptide occupies residues 1–23 (MMSLQMLLLAALLLGTSLQHASA). 2 disulfide bridges follow: Cys-33-Cys-57 and Cys-34-Cys-73.

Belongs to the intercrine beta (chemokine CC) family.

It is found in the secreted. Its function is as follows. Chemokine, which displays chemotactic activity for T lymphocytes, preferentially Th2 cells, but not monocytes or granulocytes. Therefore plays an important role in a wide range of inflammatory and immunological processes. Acts by binding to CCR4 at T-cell surface. Mediates GM-CSF/CSF2-driven pain and inflammation. In the brain, required to maintain the typical, highly branched morphology of hippocampal microglia under homeostatic conditions. May be important for the appropriate adaptation of microglial morphology and synaptic plasticity to acute lipopolysaccharide (LPS)-induced neuroinflammation. Plays a role in wound healing, mainly by inducing fibroblast migration into the wound. The protein is C-C motif chemokine 17 (Ccl17) of Rattus norvegicus (Rat).